Here is a 599-residue protein sequence, read N- to C-terminus: PR domain zinc finger protein 5 (599 aa).

Positions 8–124 (DRFALKSSRV…TDTELLIGYL (117 aa)) constitute an SET domain. 12 consecutive C2H2-type zinc fingers follow at residues 167 to 190 (FACP…QSLH), 199 to 221 (FKCE…FEQH), 231 to 256 (FVCK…ENVH), 264 to 286 (LICS…RKIH), 289 to 311 (FDCQ…MITH), 317 to 339 (YNCE…KVIH), 345 to 367 (YQCK…KKTH), 373 to 395 (FQCD…LLIH), 401 to 424 (FKCH…QVVH), 430 to 452 (YRCE…KKTH), 458 to 480 (KVCP…IRSH), and 486 to 508 (YQCP…IRTH). A C2H2-type 13; degenerate zinc finger spans residues 514-536 (YQCSECSKAFSQKRGLDEHKRTH). C2H2-type zinc fingers lie at residues 542–564 (FQCD…KMTH) and 571–594 (AECH…DNIH).

It belongs to the class V-like SAM-binding methyltransferase superfamily. As to quaternary structure, interacts with EHMT2/G9A, GFI1 and HDAC1.

It localises to the nucleus. Functionally, sequence-specific DNA-binding transcription factor. Represses transcription at least in part by recruitment of the histone methyltransferase EHMT2/G9A and histone deacetylases such as HDAC1. Regulates hematopoiesis-associated protein-coding and microRNA (miRNA) genes. May regulate the expression of proteins involved in extracellular matrix development and maintenance, connective tissue components and molecules regulating cell migration and adhesion. May cause G2/M arrest and apoptosis in cancer cells. The polypeptide is PR domain zinc finger protein 5 (Prdm5) (Mus musculus (Mouse)).